Consider the following 636-residue polypeptide: uncharacterized protein (636 aa).

Transmembrane regions (helical) follow at residues 12 to 32 (AVIY…FGSI), 34 to 54 (IMHL…TTTG), and 75 to 95 (IGAG…FMSF). Residues 112-231 (KNHFILCGFG…KKAGANRIIS (120 aa)) form the RCK N-terminal domain.

It is found in the cell membrane. This is an uncharacterized protein from Methanothermus fervidus (strain ATCC 43054 / DSM 2088 / JCM 10308 / V24 S).